We begin with the raw amino-acid sequence, 919 residues long: Translocase of chloroplast 101, chloroplastic (919 aa).

Disordered regions lie at residues 20–47 (SASR…VIEG) and 64–211 (VDDE…NETR). Over residues 73–88 (SENKAVVETEKVESKP) the composition is skewed to basic and acidic residues. The span at 96 to 128 (FAEEDGDSDADAEDEDDEDDEDDDEDDDDEDDK) shows a compositional bias: acidic residues. A compositionally biased stretch (polar residues) spans 182-207 (QRPNGAPSTQLTATTEENANSDTAEG). The AIG1-type G domain maps to 284 to 513 (DFACTILVLG…KLQETATPGR (230 aa)). The G1 stretch occupies residues 293 to 300 (GKTGVGKS). 296 to 301 (GVGKSA) provides a ligand contact to GTP. Ser300 provides a ligand contact to Mg(2+). The interval 319–323 (PSTNK) is G2. A G3 region spans residues 340–343 (DTPG). The segment at 412-415 (THAS) is G4. Residues His413 and 461–462 (EN) each bind GTP. Residues 461 to 463 (ENH) are G5. 2 disordered regions span residues 540 to 585 (LPDE…LTKE) and 611 to 650 (RRRK…PMPD). Residues 543–567 (EQLDESDESDDDEEEEDSEADDYDE) are compositionally biased toward acidic residues. Positions 574–585 (LSKEELEELTKE) are enriched in basic and acidic residues. A compositionally biased stretch (acidic residues) spans 629–638 (AQPDEADDEA). Positions 641–650 (PAAVPVPMPD) are enriched in low complexity. Residues 893–914 (MVLIGIVPILRSLINCRFGFGG) traverse the membrane as a helical segment.

Belongs to the TRAFAC class TrmE-Era-EngA-EngB-Septin-like GTPase superfamily. AIG1/Toc34/Toc159-like paraseptin GTPase family. TOC159 subfamily. In terms of assembly, part of the TOC core complex. It depends on Mg(2+) as a cofactor.

The protein localises to the plastid. It is found in the chloroplast outer membrane. Functionally, GTPase involved in protein precursor import into chloroplasts. Seems to recognize chloroplast-destined precursor proteins and regulate their presentation to the translocation channel through GTP hydrolysis. Probably specialized in the import of nuclear encoded non-photosynthetic preproteins from the cytoplasm to the chloroplast. The polypeptide is Translocase of chloroplast 101, chloroplastic (Physcomitrium patens (Spreading-leaved earth moss)).